A 358-amino-acid polypeptide reads, in one-letter code: Methylthioribose-1-phosphate isomerase (358 aa).

Substrate contacts are provided by residues 54-56, R96, and Q205; that span reads RGA. Residue D246 is the Proton donor of the active site. Substrate is bound at residue 256–257; that stretch reads NK.

It belongs to the eIF-2B alpha/beta/delta subunits family. MtnA subfamily.

The enzyme catalyses 5-(methylsulfanyl)-alpha-D-ribose 1-phosphate = 5-(methylsulfanyl)-D-ribulose 1-phosphate. Its pathway is amino-acid biosynthesis; L-methionine biosynthesis via salvage pathway; L-methionine from S-methyl-5-thio-alpha-D-ribose 1-phosphate: step 1/6. Catalyzes the interconversion of methylthioribose-1-phosphate (MTR-1-P) into methylthioribulose-1-phosphate (MTRu-1-P). In Azotobacter vinelandii (strain DJ / ATCC BAA-1303), this protein is Methylthioribose-1-phosphate isomerase.